Reading from the N-terminus, the 196-residue chain is Putative tyrosine-protein phosphatase OCA1 (196 aa).

The Tyrosine-protein phosphatase domain occupies 33–192 (NFCPVEKQLY…SVQIDPTKMP (160 aa)). Residue C130 is the Phosphocysteine intermediate of the active site.

Belongs to the protein-tyrosine phosphatase family.

The protein resides in the cytoplasm. The catalysed reaction is O-phospho-L-tyrosyl-[protein] + H2O = L-tyrosyl-[protein] + phosphate. Its function is as follows. Putative tyrosine-protein phosphatase required for protection against superoxide stress. The protein is Putative tyrosine-protein phosphatase OCA1 (OCA1) of Debaryomyces hansenii (strain ATCC 36239 / CBS 767 / BCRC 21394 / JCM 1990 / NBRC 0083 / IGC 2968) (Yeast).